A 721-amino-acid chain; its full sequence is Kinesin-like protein KIF2C (721 aa).

The segment at 1–250 (MESLHARLFP…CSPLTVTDPI (250 aa)) is globular. Residues serine 3 and serine 19 each carry the phosphoserine modification. Position 92 is a phosphoserine; by AURKB (serine 92). The Microtubule tip localization signal motif lies at 95–98 (SKIP). Phosphoserine is present on residues serine 106, serine 108, serine 112, serine 162, serine 171, serine 183, and serine 188. The interval 164 to 188 (EAEEQAHSTRSTSSANPGNSVRRKS) is disordered. Positions 171 to 182 (STRSTSSANPGN) are enriched in polar residues. The tract at residues 203 to 234 (EKRAQNSELRIKRAQEYDSSFPNWEFARMIKE) is negative regulator of microtubule-binding. The 331-residue stretch at 254–584 (RICVCVRKRP…LRYADRVKEL (331 aa)) folds into the Kinesin motor domain. ATP-binding positions include arginine 260 and 344–351 (GQTGSGKT). Residues serine 515 and serine 626 each carry the phosphoserine modification. A coiled-coil region spans residues 614 to 652 (GNEEEELSSQMSSFNEAMTQIRELEERALEELREIIQQG).

This sequence belongs to the TRAFAC class myosin-kinesin ATPase superfamily. Kinesin family. MCAK/KIF2 subfamily. In terms of assembly, interacts with CENPH. Interacts with MTUS2/TIP150; the interaction is direct. Interacts with MAPRE1; the interaction is direct, regulated by phosphorylation and is probably required for targeting to growing microtubule plus ends. Interacts with KIF18B at microtubule tips; this interaction increases the affinity of both partners for microtubule plus ends and is required for robust microtubule depolymerization. Phosphorylation by AURKA or AURKB strongly reduces KIF18B-binding. Phosphorylation by AURKB, regulates association with centromeres and kinetochores and the microtubule depolymerization activity. Post-translationally, ubiquitinated.

The protein resides in the cytoplasm. It is found in the cytoskeleton. The protein localises to the nucleus. It localises to the chromosome. Its subcellular location is the centromere. The protein resides in the kinetochore. Functionally, in complex with KIF18B, constitutes the major microtubule plus-end depolymerizing activity in mitotic cells. Regulates the turnover of microtubules at the kinetochore and functions in chromosome segregation during mitosis. Plays a role in chromosome congression and is required for the lateral to end-on conversion of the chromosome-microtubule attachment. The protein is Kinesin-like protein KIF2C (Kif2c) of Mus musculus (Mouse).